A 393-amino-acid chain; its full sequence is Pre-mRNA-splicing regulator WTAP (393 aa).

Residues glutamine 242–leucine 393 form a disordered region. Basic and acidic residues predominate over residues glutamate 254–glycine 267. Polar residues-rich tracts occupy residues glycine 272 to serine 286 and aspartate 321 to threonine 353. Basic and acidic residues predominate over residues aspartate 354 to valine 365. The segment covering glycine 369–leucine 393 has biased composition (polar residues).

The protein belongs to the fl(2)d family. In terms of assembly, component of the WMM complex, a N6-methyltransferase complex composed of a catalytic subcomplex, named MAC, and of an associated subcomplex, named MACOM. Component of the MACOM subcomplex.

It is found in the nucleus speckle. It localises to the nucleus. The protein localises to the nucleoplasm. In terms of biological role, associated component of the WMM complex, a complex that mediates N6-methyladenosine (m6A) methylation of RNAs, a modification that plays a role in the efficiency of mRNA splicing and RNA processing. The sequence is that of Pre-mRNA-splicing regulator WTAP from Xenopus laevis (African clawed frog).